We begin with the raw amino-acid sequence, 503 residues long: Arabinose import ATP-binding protein AraG 1 (503 aa).

ABC transporter domains lie at L5–R240 and L253–G497. Residue G37 to S44 coordinates ATP.

This sequence belongs to the ABC transporter superfamily. Arabinose importer (TC 3.A.1.2.2) family. In terms of assembly, the complex is composed of two ATP-binding proteins (AraG), two transmembrane proteins (AraH) and a solute-binding protein (AraF).

It is found in the cell inner membrane. The enzyme catalyses L-arabinose(out) + ATP + H2O = L-arabinose(in) + ADP + phosphate + H(+). Its function is as follows. Part of the ABC transporter complex AraFGH involved in arabinose import. Responsible for energy coupling to the transport system. This Burkholderia thailandensis (strain ATCC 700388 / DSM 13276 / CCUG 48851 / CIP 106301 / E264) protein is Arabinose import ATP-binding protein AraG 1.